The chain runs to 204 residues: MASKGEEKPELVGSKQGIVSVTKAKHDQIVLVLRVVAFLATASATIVMGLNQETKTLLVGTIGTTPIRATLKAKFQHTPAFVFFVVANGLASVYNLVMLGVDVFGRKLDCKGLRLVIISILDMVIVAVVAAGASSAAFMAELGKNGNSHAKWNKICDKFESFCHQGGGALIPSFIALLLLFLISAISIITLHNQKLTSPHATTP.

Residues 1–28 (MASKGEEKPELVGSKQGIVSVTKAKHDQ) are Cytoplasmic-facing. Residues 29-49 (IVLVLRVVAFLATASATIVMG) traverse the membrane as a helical segment. The Extracellular segment spans residues 50–80 (LNQETKTLLVGTIGTTPIRATLKAKFQHTPA). Residues 81–101 (FVFFVVANGLASVYNLVMLGV) form a helical membrane-spanning segment. At 102 to 114 (DVFGRKLDCKGLR) the chain is on the cytoplasmic side. Residues 115–135 (LVIISILDMVIVAVVAAGASS) form a helical membrane-spanning segment. Residues 136-168 (AAFMAELGKNGNSHAKWNKICDKFESFCHQGGG) lie on the Extracellular side of the membrane. The chain crosses the membrane as a helical span at residues 169–189 (ALIPSFIALLLLFLISAISII). Over 190–204 (TLHNQKLTSPHATTP) the chain is Cytoplasmic.

The protein belongs to the Casparian strip membrane proteins (CASP) family. As to quaternary structure, homodimer and heterodimers.

The protein resides in the cell membrane. This is CASP-like protein 1B2 from Vitis vinifera (Grape).